A 209-amino-acid polypeptide reads, in one-letter code: Ribosomal RNA large subunit methyltransferase E (209 aa).

S-adenosyl-L-methionine is bound by residues Gly63, Trp65, Asp83, Asp99, and Asp124. Lys164 (proton acceptor) is an active-site residue.

This sequence belongs to the class I-like SAM-binding methyltransferase superfamily. RNA methyltransferase RlmE family.

It is found in the cytoplasm. It carries out the reaction uridine(2552) in 23S rRNA + S-adenosyl-L-methionine = 2'-O-methyluridine(2552) in 23S rRNA + S-adenosyl-L-homocysteine + H(+). Its function is as follows. Specifically methylates the uridine in position 2552 of 23S rRNA at the 2'-O position of the ribose in the fully assembled 50S ribosomal subunit. The polypeptide is Ribosomal RNA large subunit methyltransferase E (Sodalis glossinidius (strain morsitans)).